Consider the following 472-residue polypeptide: Ribulose bisphosphate carboxylase large chain (472 aa).

Substrate-binding residues include N120 and T170. K172 acts as the Proton acceptor in catalysis. K174 provides a ligand contact to substrate. 3 residues coordinate Mg(2+): K198, D200, and E201. Residue K198 is modified to N6-carboxylysine. The active-site Proton acceptor is H291. Residues R292, H324, and S376 each contribute to the substrate site.

This sequence belongs to the RuBisCO large chain family. Type I subfamily. As to quaternary structure, heterohexadecamer of 8 large chains and 8 small chains. Requires Mg(2+) as cofactor.

It localises to the carboxysome. It carries out the reaction 2 (2R)-3-phosphoglycerate + 2 H(+) = D-ribulose 1,5-bisphosphate + CO2 + H2O. It catalyses the reaction D-ribulose 1,5-bisphosphate + O2 = 2-phosphoglycolate + (2R)-3-phosphoglycerate + 2 H(+). RuBisCO catalyzes two reactions: the carboxylation of D-ribulose 1,5-bisphosphate, the primary event in carbon dioxide fixation, as well as the oxidative fragmentation of the pentose substrate in the photorespiration process. Both reactions occur simultaneously and in competition at the same active site. The chain is Ribulose bisphosphate carboxylase large chain from Gloeothece citriformis (strain PCC 7424) (Cyanothece sp. (strain PCC 7424)).